The chain runs to 360 residues: Meiosis-inducing protein 1 (360 aa).

The tract at residues 102–135 is disordered; the sequence is SKETKTTKDCTMATGPERGKKSSESTRSSSLSSL. A compositionally biased stretch (low complexity) spans 126–135; that stretch reads STRSSSLSSL.

As to quaternary structure, interacts with UME6.

Its subcellular location is the nucleus. Its function is as follows. Transcription factor required for sporulation and for early sporulation-specific genes expression. Positive regulator of SME1/IME2 expression. Directly activates expression of SLZ1 during meiosis. The polypeptide is Meiosis-inducing protein 1 (IME1) (Saccharomyces cerevisiae (strain ATCC 204508 / S288c) (Baker's yeast)).